Reading from the N-terminus, the 74-residue chain is Sec-independent protein translocase protein TatA (74 aa).

A helical membrane pass occupies residues 1–21; the sequence is MGTFSIWHWLIVLLVVVVVFG. Positions 50–74 are disordered; sequence TAPAGQVANQSTADQTIDVQTKPKG. The segment covering 56–68 has biased composition (polar residues); the sequence is VANQSTADQTIDV.

The protein belongs to the TatA/E family. As to quaternary structure, the Tat system comprises two distinct complexes: a TatABC complex, containing multiple copies of TatA, TatB and TatC subunits, and a separate TatA complex, containing only TatA subunits. Substrates initially bind to the TatABC complex, which probably triggers association of the separate TatA complex to form the active translocon.

Its subcellular location is the cell inner membrane. Part of the twin-arginine translocation (Tat) system that transports large folded proteins containing a characteristic twin-arginine motif in their signal peptide across membranes. TatA could form the protein-conducting channel of the Tat system. In Verminephrobacter eiseniae (strain EF01-2), this protein is Sec-independent protein translocase protein TatA.